The chain runs to 2467 residues: Transcription factor TFIIIB component B'' homolog (2467 aa).

Disordered stretches follow at residues 1–145 (MFRR…RYRI) and 159–243 (LRKE…VDDG). Positions 1–301 (MFRRARLSVK…TYSSFRKNYY (301 aa)) are interaction with ZBTB43. Over residues 81–92 (AAESSTLSSASS) the composition is skewed to low complexity. Residues 99-118 (SSTSSLVQPSGSAPSQSRPL) are compositionally biased toward polar residues. 2 stretches are compositionally biased toward basic and acidic residues: residues 133–144 (AKEKQPCSDRYR) and 177–186 (RPPDRSKMTM). The stretch at 144–177 (RIYKARKLREMLKEELRKEKKQWKNKFSTNESQR) forms a coiled coil. Positions 231 to 242 (NDNEDVEEEVDD) are enriched in acidic residues. In terms of domain architecture, Myb-like spans 297 to 347 (RKNYYSKPWSNKETDMFFLAISMVGTDFSMIGQLFPHRARIEIKNKFKREE). The interval 357-472 (AFQEKRPFDF…QEKKRRRNQG (116 aa)) is required for phosphorylation by CSNK2A1. Disordered stretches follow at residues 380–513 (EEKR…ECNK), 576–720 (SADM…VKAA), 748–844 (PPQT…PATW), 866–893 (LTAT…NAEM), 971–1200 (LQEN…SSKI), 1231–1270 (LGRH…VKPA), 1318–1388 (DSDQ…LVPI), 1409–1448 (LPVR…PELQ), 1527–1561 (KAKP…EDHL), 1592–1706 (IHSE…RASK), 1902–1926 (IVSK…LPTR), 1977–2014 (IQRE…QCVG), 2058–2083 (LDSG…SDVP), 2179–2206 (LVVQ…DLTS), 2260–2290 (GIFP…SGSL), and 2304–2449 (LPQS…EEVT). The stretch at 458-487 (EQDQNQEKKRRRNQGEANKQEATNLLERVL) forms a coiled coil. Over residues 649–660 (AAEKNHMEKETM) the composition is skewed to basic and acidic residues. Positions 809-824 (RFQKPKPNTGRRRRRI) are enriched in basic residues. Composition is skewed to basic and acidic residues over residues 873 to 884 (KDSESDVKDSGR), 992 to 1002 (TGKDLAMKEST), 1009 to 1041 (TEER…RGEM), 1089 to 1098 (EGKELNLRET), 1112 to 1130 (EKTD…ERES), and 1150 to 1170 (DLGK…EEHS). 4 stretches are compositionally biased toward polar residues: residues 1180–1200 (LSSS…SSKI), 1251–1265 (DTNL…QQPL), 1318–1330 (DSDQ…QHNV), and 1364–1382 (PPNS…NQEN). Composition is skewed to basic and acidic residues over residues 1429 to 1448 (QIVE…PELQ), 1536 to 1561 (RRKD…EDHL), and 1592 to 1603 (IHSEESGSDRND). Composition is skewed to polar residues over residues 1621-1642 (EQPT…SSCP) and 1650-1665 (YPKT…SSAS). Residues 1688–1697 (RGSKRIRGKT) are compositionally biased toward basic residues. 3 stretches are compositionally biased toward basic and acidic residues: residues 1902 to 1913 (IVSKEQSNRDAA), 1977 to 1996 (IQRE…DKSH), and 2068 to 2078 (AAKEALKETPK). Over residues 2185–2199 (PSLSPSRSGSSEKPP) the composition is skewed to low complexity. 3 stretches are compositionally biased toward polar residues: residues 2262–2273 (FPTSESTHATSK), 2319–2334 (PASN…SSSK), and 2414–2429 (TAGS…SSDQ).

Component of TFIIIB complex. The TFIIIB complex has two activities, alpha and beta. The TFIIIB-alpha and TFIIIB-beta activities are required for transcription of genes with TFIIIC-bound internal promoters and PSE transcription factor-bound external promoters, respectively. The TFIIIB-alpha activity complex is composed of TBP, BDP1, and a complex containing both BRF2 and at least four stably associated proteins; YY1 facilitates the formation of TFIIIB-alpha activity complex. The TFIIIB-beta activity complex is composed of TBP, BDP1, and BRF1. Interacts with BRF1; this interaction diminishes during mitosis resulting in the release of BDP1 from chromosomal templates. Component of TFIIIC complex. The TFIIIC complex has two activities, C1 and C2. The TFIIIC2 activity complex is only required for transcription of the 'classical' pol III genes whereas the TFIIIC1 activity complex is required for transcription of all pol III genes. The TFIIIC1 activity complex is composed at least of BDP1. Interacts with ZBTB43. Phosphorylated by CSNK2A1 during mitosis, resulting in its release from chromatin and suppression of polymerase III transcription. In terms of tissue distribution, expressed in the cochlea, particularly in the spiral ligament, the capillaries of the stria vascularis and the basilar membrane.

It is found in the nucleus. Its function is as follows. General activator of RNA polymerase III transcription. Requires for transcription from all three types of polymerase III promoters. Requires for transcription of genes with internal promoter elements and with promoter elements upstream of the initiation site. This Mus musculus (Mouse) protein is Transcription factor TFIIIB component B'' homolog (Bdp1).